A 1690-amino-acid polypeptide reads, in one-letter code: MPMSSFKRKIKAIQIKIASPDVIRSWSGGEVKKPETINYRTFKPERDGLFCERIFGPVKDYECACGKYKGKKYEGTVCERCGVRVESREARRKRMGHIELAAPAVHIWYLESIPSVLGTLLNMNVSDLENIIYYGSRRVIERAFIVTDPKDTPFAQGDIIYETEYRIYRKKWDFEVEQAFIVKNPRSPVLSDIDGEVILRTEKTVTGREITWIIVRNVNRAEHTVLPGMIITVKDGQEVEKGQDLTREMNVDPLYAPFDGHVEIDEISNTITVKPLTTSKDQPVVFTVPYGARVLVSNGQKVKKGDQLTTSTTLPAVKASISGRVKFGSNLNVRALEDGNFEVLSSGNVYIEQVIEERKYPVFEGALVYVNNGDQVKKGDHLADRFLFEEEYLSSTEYKIFESHYPTMFDVEERTENDRPIVVITDIDPEVSKETGLKMGDIITENEYEAYLQIYPEKIVADAGAQAIKKLLQNLDLEELRAELEAELKKLPASSSKAMKLRRRLKMVKDFIKSGNKPEWMVLEVVPVIPPDLRPMIQIEGGRFATTDLNELYRRLINRNNRLRKLLELGAPEIILRNEKRMLQEAVDALIHNGSDSEGKRSRRAVLKDRNGRPLKSLTDLLKGKKGRFRRNLLGKRVDYSGRAVIVVGPHLKIHQCGIPKKMAMELFKPFVLAKLLGEGSTSKTMRKVKKAIIEKEMPEAWEVLEEVIKGSVVLLNRAPTLHRMSIQAFEPKLVEGNAIQLHPVVCPPFNADFDGDQMAVHVPLSAAAQAEARFLMLSRYNIISPAHGKPISLPTQDIIIGSYYLTTVGKDFDSLKEEDIRWRFSSPEEAMLAYHLGYIKLHTPILIKVSIKGEEKRIKTTLGRVIFNSILPEDLRDYNRIFDKKQINALVYETFKRYGIDRAADLLDDVKDLGFHYATVSGLTLSLKDLKIPPERDEILKRTWEKVRIIEENYERGFLTEEQRKSEIIRLWMNVTEEITELTSKTLAEDPFNPIYMMVNSGARGNIDQVKQLAGIRGLMIKAYDPRSREIKSKIFKGQAIHEALTFDYPVDKNLREGVDILQFFISTYGARKGQVDTAMNTSFAGYLTRRLVDVAQSVTVTEPDCGTHEGIRAMDLIKDGTVVEKMNEFLFGRVLASDVLDPETKEVLKNPETGKEYTRNTMLTDDDANFLASYKKMVDVVKYDEIDITELSLPNMYAEIAEPVGEYKEGTELTWDVVKAARNEGKYRIKVKMYPVVGTVYANEQPLYDKKGERELLVYQEVINEVVAKLLEENGVEKVLVRPDIIVRSPLTCESEYGVCAACYGMDLSNHKIVNVGEAVGIVAAQSIGEPGTQLTMRTFHVGGVMGASDIVSGLTTVEKTFEPYAFLREEKSGGKKEIRKYYGSEAVLCEVDGFVKDIATDETGRTVIYIEDYAGGIHAYRIPKRAKVKVKKGQKVLRGDTLTTGAIVWWKLLELESEKGVLTAMNLLKIIKNAYVQQGVSIHDKHFEIIFRQMLSMALVIDPGDSDYLPDQLVPLVDIKRTNREILEGNARVEENRKWVIGKMLAKRVITETDDGELVELAQKGEEVTEELLKKFIEAGIKEIDVVEKDRVVTYQILPKEPIKYKRRLLSLKKAALNYPGWLSAAAFEETAWVLTAAAIEGKVDPLIGLKENVIVGQLIPAGTGLDVFAGIQVEETPRAAAEEKLA.

Positions 63, 65, 78, and 81 each coordinate Zn(2+). Residues Asp753, Asp755, and Asp757 each coordinate Mg(2+). 4 residues coordinate Zn(2+): Cys1107, Cys1295, Cys1302, and Cys1305.

The protein belongs to the RNA polymerase beta' chain family. As to quaternary structure, the RNAP catalytic core consists of 2 alpha, 1 beta, 1 beta' and 1 omega subunit. When a sigma factor is associated with the core the holoenzyme is formed, which can initiate transcription. Mg(2+) serves as cofactor. The cofactor is Zn(2+).

The enzyme catalyses RNA(n) + a ribonucleoside 5'-triphosphate = RNA(n+1) + diphosphate. Its function is as follows. DNA-dependent RNA polymerase catalyzes the transcription of DNA into RNA using the four ribonucleoside triphosphates as substrates. The chain is DNA-directed RNA polymerase subunit beta' from Thermotoga neapolitana (strain ATCC 49049 / DSM 4359 / NBRC 107923 / NS-E).